Reading from the N-terminus, the 437-residue chain is Serine carboxypeptidase-like 17 (437 aa).

The first 26 residues, 1-26 (MGKECYYLSWILKFHLLLVLIQLVDS), serve as a signal peptide directing secretion. 3 disulfides stabilise this stretch: cysteine 85-cysteine 327, cysteine 249-cysteine 263, and cysteine 287-cysteine 293. A glycan (N-linked (GlcNAc...) asparagine) is linked at asparagine 106. Serine 181 is a catalytic residue. Aspartate 362 is a catalytic residue. Asparagine 378 carries an N-linked (GlcNAc...) asparagine glycan. Histidine 415 is an active-site residue.

This sequence belongs to the peptidase S10 family. Expressed in seedlings and siliques.

The protein localises to the secreted. Its function is as follows. Probable carboxypeptidase. The chain is Serine carboxypeptidase-like 17 (SCPL17) from Arabidopsis thaliana (Mouse-ear cress).